The sequence spans 181 residues: Ferritin heavy chain (181 aa).

An N-acetylmethionine modification is found at methionine 1. Threonine 2 is subject to N-acetylthreonine; in Ferritin heavy chain, N-terminally processed. Residues 11–160 (QNYHQDSEAA…DHITNLRKMG (150 aa)) form the Ferritin-like diiron domain. Fe cation-binding residues include glutamate 28, glutamate 63, histidine 66, glutamate 108, and glutamine 142. Phosphoserine is present on serine 179.

It belongs to the ferritin family. In terms of assembly, oligomer of 24 subunits. There are two types of subunits: L (light) chain and H (heavy) chain. The major chain can be light or heavy, depending on the species and tissue type. The functional molecule forms a roughly spherical shell with a diameter of 12 nm and contains a central cavity into which the insoluble mineral iron core is deposited. Interacts with NCOA4; NCOA4 promotes targeting of the iron-binding ferritin complex to autolysosomes following starvation or iron depletion.

It is found in the cytoplasm. Its subcellular location is the lysosome. It localises to the cytoplasmic vesicle. The protein localises to the autophagosome. It catalyses the reaction 4 Fe(2+) + O2 + 4 H(+) = 4 Fe(3+) + 2 H2O. Functionally, stores iron in a soluble, non-toxic, readily available form. Important for iron homeostasis. Has ferroxidase activity. Iron is taken up in the ferrous form and deposited as ferric hydroxides after oxidation. Also plays a role in delivery of iron to cells. Mediates iron uptake in capsule cells of the developing kidney. Delivery to lysosomes is mediated by the cargo receptor NCOA4 for autophagic degradation and release of iron. The protein is Ferritin heavy chain (FTH1) of Bos taurus (Bovine).